Consider the following 245-residue polypeptide: Eukaryotic translation initiation factor 3 subunit K (245 aa).

Residues 46–227 (YDCYANLALL…EAKGTVVREN (182 aa)) form the PCI domain.

Belongs to the eIF-3 subunit K family. Component of the eukaryotic translation initiation factor 3 (eIF-3) complex.

The protein resides in the cytoplasm. Its function is as follows. Component of the eukaryotic translation initiation factor 3 (eIF-3) complex, which is involved in protein synthesis of a specialized repertoire of mRNAs and, together with other initiation factors, stimulates binding of mRNA and methionyl-tRNAi to the 40S ribosome. The eIF-3 complex specifically targets and initiates translation of a subset of mRNAs involved in cell proliferation. The polypeptide is Eukaryotic translation initiation factor 3 subunit K (Sclerotinia sclerotiorum (strain ATCC 18683 / 1980 / Ss-1) (White mold)).